We begin with the raw amino-acid sequence, 200 residues long: Protein Nef (200 aa).

Glycine 2 is lipidated: N-myristoyl glycine; by host. Phosphoserine; by host is present on serine 6. Residues 58–60 (EEE) are acidic; interacts with host PACS1 and PACS2; stabilizes the interaction of NEF/MHC-I with host AP1M1; necessary for MHC-I internalization. The SH3-binding; interaction with Src family tyrosine kinases stretch occupies residues 64-73 (PVRPQVPLRP). Positions 67–70 (PQVP) match the PxxP; stabilizes the interaction of NEF/MHC-I with host AP1M1; necessary for MHC-I internalization motif. The interval 103 to 119 (EILDLWVYHTQGYFPDW) is mediates dimerization, Nef-PTE1 interaction. The tract at residues 143-175 (VDPEEIEKANEGENNCLLHPISLHGMEDEDREV) is binding to ATP6V1H. The Dileucine internalization motif; necessary for CD4 internalization signature appears at 159–160 (LL). Positions 169-170 (ED) match the Diacidic; necessary for CD4 internalization motif.

It belongs to the lentivirus primate group Nef protein family. In terms of assembly, monomer; cytosolic form. Homodimer; membrane bound form. Interacts with Nef associated p21-activated kinase (PAK2); this interaction activates PAK2. Associates with the Nef-MHC-I-AP1 complex; this complex is required for MHC-I internalization. Interacts (via C-terminus) with host PI3-kinase. Interacts with host PACS1; this interaction seems to be weak. Interacts with host PACS2. Interacts with host LCK and MAPK3; these interactions inhibit the kinase activity of the latter. Interacts with host ATP6V1H; this interaction may play a role in CD4 endocytosis. Associates with the CD4-Nef-AP2 complex; this complex is required for CD4 internalization. Interacts with host AP2 subunit alpha and AP2 subunit sigma2. Interacts with TCR-zeta chain; this interaction up-regulates the Fas ligand (FasL) surface expression. Interacts with host HCK, LYN, and SRC; these interactions activate the Src family kinases. Interacts with MAP3K5; this interaction inhibits the Fas and TNFR-mediated death signals. Interacts with beta-COP and PTE1. Interacts with human RACK1; this increases Nef phosphorylation by PKC. Interacts with TP53; this interaction decreases the half-life of TP53, protecting the infected cell against p53-mediated apoptosis. The virion-associated Nef proteins are cleaved by the viral protease to release the soluble C-terminal core protein. Nef is probably cleaved concomitantly with viral structural proteins on maturation of virus particles. Post-translationally, myristoylated. In terms of processing, phosphorylated on serine residues, probably by host PKCdelta and theta.

The protein resides in the host cell membrane. It is found in the virion. The protein localises to the secreted. It localises to the host Golgi apparatus membrane. Its function is as follows. Factor of infectivity and pathogenicity, required for optimal virus replication. Alters numerous pathways of T-lymphocyte function and down-regulates immunity surface molecules in order to evade host defense and increase viral infectivity. Alters the functionality of other immunity cells, like dendritic cells, monocytes/macrophages and NK cells. In terms of biological role, in infected CD4(+) T-lymphocytes, down-regulates the surface MHC-I, mature MHC-II, CD4, CD28, CCR5 and CXCR4 molecules. Mediates internalization and degradation of host CD4 through the interaction of with the cytoplasmic tail of CD4, the recruitment of AP-2 (clathrin adapter protein complex 2), internalization through clathrin coated pits, and subsequent transport to endosomes and lysosomes for degradation. Diverts host MHC-I molecules to the trans-Golgi network-associated endosomal compartments by an endocytic pathway to finally target them for degradation. MHC-I down-regulation may involve AP-1 (clathrin adapter protein complex 1) or possibly Src family kinase-ZAP70/Syk-PI3K cascade recruited by PACS2. In consequence infected cells are masked for immune recognition by cytotoxic T-lymphocytes. Decreasing the number of immune receptors also prevents reinfection by more HIV particles (superinfection). Down-regulates host SERINC3 and SERINC5 thereby excluding these proteins from the viral particles. Virion infectivity is drastically higher when SERINC3 or SERINC5 are excluded from the viral envelope, because these host antiviral proteins impair the membrane fusion event necessary for subsequent virion penetration. Bypasses host T-cell signaling by inducing a transcriptional program nearly identical to that of anti-CD3 cell activation. Interaction with TCR-zeta chain up-regulates the Fas ligand (FasL). Increasing surface FasL molecules and decreasing surface MHC-I molecules on infected CD4(+) cells send attacking cytotoxic CD8+ T-lymphocytes into apoptosis. Functionally, plays a role in optimizing the host cell environment for viral replication without causing cell death by apoptosis. Protects the infected cells from apoptosis in order to keep them alive until the next virus generation is ready to strike. Inhibits the Fas and TNFR-mediated death signals by blocking MAP3K5/ASK1. Decreases the half-life of TP53, protecting the infected cell against p53-mediated apoptosis. Inhibits the apoptotic signals regulated by the Bcl-2 family proteins through the formation of a Nef/PI3-kinase/PAK2 complex that leads to activation of PAK2 and induces phosphorylation of host BAD. Its function is as follows. Extracellular Nef protein targets CD4(+) T-lymphocytes for apoptosis by interacting with CXCR4 surface receptors. In Human immunodeficiency virus type 1 group M subtype F2 (isolate MP255) (HIV-1), this protein is Protein Nef.